Here is a 646-residue protein sequence, read N- to C-terminus: Beta-galactosidase-1-like protein (646 aa).

Positions 1 to 23 are cleaved as a signal peptide; it reads MPPDLPSLLLRLVVLLLLSQAEA. Asn-93 carries N-linked (GlcNAc...) asparagine glycosylation. The active-site Proton donor is the Glu-182. Asn-239 carries an N-linked (GlcNAc...) asparagine glycan. Residue Glu-260 is the Nucleophile of the active site.

Belongs to the glycosyl hydrolase 35 family.

It localises to the secreted. Its function is as follows. Probable glycosyl hydrolase. The polypeptide is Beta-galactosidase-1-like protein (Glb1l) (Mus musculus (Mouse)).